The following is a 141-amino-acid chain: MEIRVFRQEDFEEVITLWERCDLLRPWNDPEMDIERKMNHDVSLFLVAEVNGEVVGTVMGGYDGHRGSAYYLGVHPEFRGRGIANALLNRLEKKLIARGCPKIQINVPEDNDMVLGMYERLGYEHADMLSLGKRLIEDEEY.

The N-acetyltransferase domain occupies 1 to 141 (MEIRVFRQED…GKRLIEDEEY (141 aa)).

It belongs to the acetyltransferase family. YpeA subfamily.

This is Acetyltransferase YpeA from Shigella boydii serotype 4 (strain Sb227).